The chain runs to 456 residues: Phosphomannomutase (456 aa).

The active-site Phosphoserine intermediate is the Ser98. 4 residues coordinate Mg(2+): Ser98, Asp245, Asp247, and Asp249.

It belongs to the phosphohexose mutase family. The cofactor is Mg(2+).

It catalyses the reaction alpha-D-mannose 1-phosphate = D-mannose 6-phosphate. It participates in nucleotide-sugar biosynthesis; GDP-alpha-D-mannose biosynthesis; alpha-D-mannose 1-phosphate from D-fructose 6-phosphate: step 2/2. Functionally, involved in the biosynthesis of the capsular polysaccharide colanic acid. The chain is Phosphomannomutase (manB) from Escherichia coli (strain K12).